Here is a 460-residue protein sequence, read N- to C-terminus: Chromosomal replication initiator protein DnaA 1 (460 aa).

A domain I, interacts with DnaA modulators region spans residues 1–68 (MRAWEEFLLL…KSGLVNNNNK (68 aa)). The domain II stretch occupies residues 68–102 (KPIRVHVTSVDKAAPFYKEKQMQQEKTAYFTMHYG). Residues 103–321 (SVNPEMTFSN…HALNLLAKRV (219 aa)) are domain III, AAA+ region. The ATP site is built by Gly151, Gly153, Lys154, and Thr155. A domain IV, binds dsDNA region spans residues 322 to 460 (MYKKLSHQLL…EFFPSEEMII (139 aa)).

The protein belongs to the DnaA family. Oligomerizes as a right-handed, spiral filament on DNA at oriC.

The protein resides in the cytoplasm. Functionally, plays an essential role in the initiation and regulation of chromosomal replication. ATP-DnaA binds to the origin of replication (oriC) to initiate formation of the DNA replication initiation complex once per cell cycle. Binds the DnaA box (a 9 base pair repeat at the origin) and separates the double-stranded (ds)DNA. Forms a right-handed helical filament on oriC DNA; dsDNA binds to the exterior of the filament while single-stranded (ss)DNA is stabiized in the filament's interior. The ATP-DnaA-oriC complex binds and stabilizes one strand of the AT-rich DNA unwinding element (DUE), permitting loading of DNA polymerase. After initiation quickly degrades to an ADP-DnaA complex that is not apt for DNA replication. Binds acidic phospholipids. The protein is Chromosomal replication initiator protein DnaA 1 of Chlamydia pneumoniae (Chlamydophila pneumoniae).